Reading from the N-terminus, the 241-residue chain is Small ribosomal subunit protein bS6 (241 aa).

Positions 97–108 (KPKIRERNRKYT) are enriched in basic residues. The segment at 97-241 (KPKIRERNRK…YNNKKPQSSN (145 aa)) is disordered. The span at 109 to 118 (LRRDRFDKPN) shows a compositional bias: basic and acidic residues. Low complexity-rich tracts occupy residues 130 to 151 (QDQQATKNQQNFQQNQQNQASQ) and 161 to 182 (DDFQQVSSNQQNFGQNQQNQSG). Positions 183-193 (YHRENNRHNQE) are enriched in basic and acidic residues. The segment covering 194–210 (NMHQNNKNHQNQTSQTQ) has biased composition (low complexity).

Belongs to the bacterial ribosomal protein bS6 family.

In terms of biological role, binds together with bS18 to 16S ribosomal RNA. The sequence is that of Small ribosomal subunit protein bS6 from Mesomycoplasma hyopneumoniae (strain J / ATCC 25934 / NCTC 10110) (Mycoplasma hyopneumoniae).